The sequence spans 259 residues: 1,2-dihydroxy-1,2-dihydronaphthalene dehydrogenase (259 aa).

An NAD(+)-binding site is contributed by 8–32 (SITGAGSGIGLELVRSFKSAGYYVS). Substrate is bound at residue serine 140. The Proton acceptor role is filled by tyrosine 153.

This sequence belongs to the short-chain dehydrogenases/reductases (SDR) family.

It catalyses the reaction (1R,2S)-1,2-dihydronaphthalene-1,2-diol + NAD(+) = naphthalene-1,2-diol + NADH + H(+). It carries out the reaction cis-1,2-dihydroxy-1,2-dihydrodibenzothiophene + NAD(+) = 1,2-dihydroxydibenzothiophene + NADH + H(+). The protein operates within aromatic compound metabolism; naphthalene degradation. Functionally, catalyzes the oxidation of naphthalene dihydrodiol into 1,2-dihydroxynaphthalene. This Pseudomonas sp. (strain C18) protein is 1,2-dihydroxy-1,2-dihydronaphthalene dehydrogenase (doxE).